Reading from the N-terminus, the 31-residue chain is Cycloviolacin-O6 (31 aa).

Positions 1 to 31 form a cross-link, cyclopeptide (Gly-Asn); sequence GTLPCGESCVWIPCISAAVGCSCKSKVCYKN. Disulfide bonds link Cys-5–Cys-21, Cys-9–Cys-23, and Cys-14–Cys-28.

Post-translationally, this is a cyclic peptide.

Probably participates in a plant defense mechanism. The chain is Cycloviolacin-O6 from Viola odorata (Sweet violet).